We begin with the raw amino-acid sequence, 148 residues long: MAPPSVPIVYAGGRGGCPGGYHGLVLYVPRGLLEETRAHLLREAPKEGVGLWAGRREVERVIPLPNVHPSPLTAYLADPLALLKALKALEREGLSLLAIYHSHPKGPALPSPRDIKEARWRVPYVIFGTDGVRAFLLPEGQEVALVVL.

An MPN domain is found at 22 to 148 (HGLVLYVPRG…EGQEVALVVL (127 aa)). The Proton donor/acceptor role is filled by Glu47. Zn(2+) is bound by residues His101, His103, and Asp114. The JAMM motif signature appears at 101 to 114 (HSHPKGPALPSPRD).

Belongs to the peptidase M67B family. Zn(2+) is required as a cofactor.

Its function is as follows. Probable metalloprotease that cleaves the ubiquitin-like modifier protein TtuB from protein conjugates, hydrolyzing the isopeptide bond between a lysine residue of the target protein and the C-terminal glycine of the modifier protein. Does not seem to work for all the TtuB conjugates. This chain is Probable TtuB-protein conjugate cleaving protease, found in Thermus thermophilus (strain ATCC BAA-163 / DSM 7039 / HB27).